A 798-amino-acid polypeptide reads, in one-letter code: Integrin beta-1 (798 aa).

The N-terminal stretch at 1-20 (MNLQLIFWIGLISSICCVFG) is a signal peptide. Residues 21–728 (QADENRCLKA…ETPECPTGPD (708 aa)) lie on the Extracellular side of the membrane. In terms of domain architecture, PSI spans 26–76 (RCLKANAKSCGECIQAGPNCGWCVNSTFLQEGMPTSARCDDLEALKKKGCH). 28 disulfides stabilise this stretch: Cys-27/Cys-45, Cys-35/Cys-464, Cys-38/Cys-64, Cys-48/Cys-75, Cys-207/Cys-213, Cys-261/Cys-301, Cys-401/Cys-415, Cys-435/Cys-462, Cys-466/Cys-486, Cys-477/Cys-489, Cys-491/Cys-500, Cys-502/Cys-533, Cys-516/Cys-531, Cys-525/Cys-536, Cys-538/Cys-553, Cys-555/Cys-576, Cys-560/Cys-574, Cys-568/Cys-579, Cys-581/Cys-590, Cys-592/Cys-615, Cys-599/Cys-613, Cys-607/Cys-618, Cys-620/Cys-630, Cys-633/Cys-636, Cys-640/Cys-691, Cys-646/Cys-665, Cys-649/Cys-661, and Cys-699/Cys-723. Residue Asn-50 is glycosylated (N-linked (GlcNAc...) asparagine). Over residues 75-91 (CHPDDIENPRGSKDVKK) the composition is skewed to basic and acidic residues. The segment at 75–107 (CHPDDIENPRGSKDVKKNKNVTNRSKGTAEKLQ) is disordered. N-linked (GlcNAc...) asparagine glycosylation is found at Asn-94 and Asn-97. Residues 140–378 (DYPIDLYYLM…QLIIDAYNSL (239 aa)) enclose the VWFA domain. Ser-152 and Ser-154 together coordinate Mg(2+). Ca(2+) is bound by residues Ser-154, Asp-157, Asp-158, and Glu-189. Positions 207–213 (CTSEQNC) are CX3CL1-binding. An N-linked (GlcNAc...) asparagine glycan is attached at Asn-212. Positions 244, 246, 248, and 249 each coordinate Ca(2+). Position 249 (Glu-249) interacts with Mg(2+). Asn-269 carries N-linked (GlcNAc...) asparagine glycosylation. The segment at 295-314 (LPNDGQCHLENDVYTMSHYY) is CX3CL1-binding. Ala-362 is a Ca(2+) binding site. Residues Asn-363, Asn-406, and Asn-417 are each glycosylated (N-linked (GlcNAc...) asparagine). The interaction with TMEM182 stretch occupies residues 383 to 465 (ILENSKLPEG…IILQFICECE (83 aa)). I-EGF domains are found at residues 466–501 (CQNE…RHCE), 502–554 (CSTD…KFCE), 555–591 (CDNF…SACD), and 592–631 (CSLD…PTCE). N-linked (GlcNAc...) asparagine glycosylation occurs at Asn-481. The N-linked (GlcNAc...) asparagine glycan is linked to Asn-520. Asn-584 carries N-linked (GlcNAc...) asparagine glycosylation. Asn-669 is a glycosylation site (N-linked (GlcNAc...) asparagine). Residues 729-751 (IIPIVAGVVAGIVLIGLALLLIW) traverse the membrane as a helical segment. At 752–798 (KLLMIIHDTREFAKFEKEKMNAKWDTGENPIYKSAVTTVVNPKYEGK) the chain is on the cytoplasmic side. A signal for sorting from recycling endosomes; interaction with ACAP1 region spans residues 762 to 767 (EFAKFE). Thr-777 bears the Phosphothreonine mark. Tyr-783 is subject to Phosphotyrosine. Residue Ser-785 is modified to Phosphoserine. An interaction with ITGB1BP1 region spans residues 785–792 (SAVTTVVN). At Thr-789 the chain carries Phosphothreonine. An N6-acetyllysine; alternate modification is found at Lys-794. Lys-794 participates in a covalent cross-link: Glycyl lysine isopeptide (Lys-Gly) (interchain with G-Cter in SUMO1); alternate.

Belongs to the integrin beta chain family. Interacts with seprase FAP (seprase); the interaction occurs at the cell surface of invadopodia membrane in a collagen-dependent manner. Heterodimer of an alpha and a beta subunit. Beta-1 associates with either alpha-1, alpha-2, alpha-3, alpha-4, alpha-5, alpha-6, alpha-7, alpha-8, alpha-9, alpha-10, alpha-11 or alpha-V. ITGA6:ITGB1 is found in a complex with CD9; interaction takes place in oocytes and is involved in sperm-egg fusion. Binds LGALS3BP and NMRK2, when associated with alpha-7, but not with alpha-5. Interacts with FLNA, FLNB, FLNC and RANBP9. Interacts with KRT1 in the presence of RACK1 and SRC. Interacts with JAML; integrin alpha-4/beta-1 may regulate leukocyte to endothelial cells adhesion by controlling JAML homodimerization. Interacts with RAB21. Interacts (via the cytoplasmic region) with RAB25 (via the hypervariable C-terminal region). Interacts with MYO10. Interacts with ITGB1BP1 (via C-terminal region); the interaction is a prerequisite for focal adhesion disassembly. Interacts with TLN1; the interaction is prevented by competitive binding of ITGB1BP1. Interacts with ACAP1; required for ITGB1 recycling. Interacts with ASAP3. Interacts with FERMT2; the interaction is inhibited in presence of ITGB1BP1. Interacts with DAB2. Interacts with FGR and HCK. Interacts with alpha-7A and alpha-7B in adult skeletal muscle. Interacts with alpha-7B in cardiomyocytes of adult heart. Interacts with EMP2; the interaction may be direct or indirect and ITGB1 has a heterodimer form. ITGA5:ITGB1 interacts with CCN3. ITGA4:ITGB1 is found in a ternary complex with CX3CR1 and CX3CL1. ITGA5:ITGB1 interacts with FBN1. ITGA5:ITGB1 acts as a receptor for fibronectin FN1 and mediates R-G-D-dependent cell adhesion to FN1. ITGA5:ITGB1 interacts with IL1B. Interacts with MDK. ITGA4:ITGB1 interacts with MDK; this interaction mediates MDK-induced osteoblast cells migration through PXN phosphorylation. ITGA6:ITGB1 interacts with MDK; this interaction mediates MDK-induced neurite-outgrowth. ITGA5:ITGB1 interacts with ACE2. Interacts with TMEM182 and LAMB1. Interacts with tensin TNS3; TNS3 also interacts with PEAK1, thus acting as an adapter molecule to bridge the association of PEAK1 with ITGB1. Interacts with tensin TNS4; the interaction displaces tensin TNS3 from the ITGB1 cytoplasmic tail and promotes ITGB1 stability. Integrin ITGA9:ITGB1 interacts with SPP1/OPN (via N-terminus). Integrin ITGA9:ITGB1 interacts with TNC/TNFN3 (via the 3rd Fibronectin type-III domain). Integrins ITGA4:ITGB1 and ITGA9:ITGB1 interact with SVEP1 (via Sushi domain 21); thereby inhibit Ca(2+) intracellular signaling and as a result repress vasocontraction. ITGA4:ITGB1 and ITGA5:ITGB1 interacts with SELP. Interacts with CD248. ITGA5:ITGB1 interacts with IGFBP1. ITGA4:ITGB1 interacts with BCAM. Interacts with ADGRG6.

Its subcellular location is the cell membrane. It is found in the cell projection. The protein resides in the invadopodium membrane. The protein localises to the ruffle membrane. It localises to the recycling endosome. Its subcellular location is the melanosome. It is found in the lamellipodium. The protein resides in the ruffle. The protein localises to the cell junction. It localises to the focal adhesion. Functionally, integrins alpha-1/beta-1, alpha-2/beta-1, alpha-10/beta-1 and alpha-11/beta-1 are receptors for collagen. Integrins alpha-1/beta-1 and alpha-2/beta-2 recognize the proline-hydroxylated sequence G-F-P-G-E-R in collagen. Integrins alpha-2/beta-1, alpha-3/beta-1, alpha-4/beta-1, alpha-5/beta-1, alpha-8/beta-1, alpha-10/beta-1, alpha-11/beta-1 and alpha-V/beta-1 are receptors for fibronectin. Alpha-4/beta-1 recognizes one or more domains within the alternatively spliced CS-1 and CS-5 regions of fibronectin. Integrin alpha-5/beta-1 is a receptor for fibrinogen. Integrin alpha-1/beta-1, alpha-2/beta-1, alpha-6/beta-1 and alpha-7/beta-1 are receptors for lamimin. Integrin alpha-6/beta-1 (ITGA6:ITGB1) is present in oocytes and is involved in sperm-egg fusion. Integrin alpha-4/beta-1 is a receptor for VCAM1 and recognizes the sequence Q-I-D-S in VCAM1. Integrin alpha-9/beta-1 is a receptor for VCAM1, cytotactin and osteopontin. It recognizes the sequence A-E-I-D-G-I-E-L in cytotactin. Integrin alpha-3/beta-1 is a receptor for epiligrin, thrombospondin and CSPG4. Integrin alpha-3/beta-1 provides a docking site for FAP (seprase) at invadopodia plasma membranes in a collagen-dependent manner and hence may participate in the adhesion, formation of invadopodia and matrix degradation processes, promoting cell invasion. Alpha-3/beta-1 may mediate with LGALS3 the stimulation by CSPG4 of endothelial cells migration. Integrin alpha-V/beta-1 is a receptor for vitronectin. Beta-1 integrins recognize the sequence R-G-D in a wide array of ligands. When associated with alpha-7/beta-1 integrin, regulates cell adhesion and laminin matrix deposition. Involved in promoting endothelial cell motility and angiogenesis. Involved in osteoblast compaction through the fibronectin fibrillogenesis cell-mediated matrix assembly process and the formation of mineralized bone nodules. May be involved in up-regulation of the activity of kinases such as PKC via binding to KRT1. Together with KRT1 and RACK1, serves as a platform for SRC activation or inactivation. Plays a mechanistic adhesive role during telophase, required for the successful completion of cytokinesis. ITGA4:ITGB1 binds to fractalkine (CX3CL1) and may act as its coreceptor in CX3CR1-dependent fractalkine signaling. ITGA4:ITGB1 and ITGA5:ITGB1 bind to PLA2G2A via a site (site 2) which is distinct from the classical ligand-binding site (site 1) and this induces integrin conformational changes and enhanced ligand binding to site 1. ITGA5:ITGB1 acts as a receptor for fibrillin-1 (FBN1) and mediates R-G-D-dependent cell adhesion to FBN1. ITGA5:ITGB1 is a receptor for IL1B and binding is essential for IL1B signaling. ITGA5:ITGB3 is a receptor for soluble CD40LG and is required for CD40/CD40LG signaling. Plays an important role in myoblast differentiation and fusion during skeletal myogenesis. ITGA9:ITGB1 may play a crucial role in SVEP1/polydom-mediated myoblast cell adhesion. Integrins ITGA9:ITGB1 and ITGA4:ITGB1 repress PRKCA-mediated L-type voltage-gated channel Ca(2+) influx and ROCK-mediated calcium sensitivity in vascular smooth muscle cells via their interaction with SVEP1, thereby inhibit vasocontraction. The sequence is that of Integrin beta-1 (ITGB1) from Felis catus (Cat).